The following is a 479-amino-acid chain: MVKLAHLLVATFGVLLVLNGCLARQSLGVPPQLGNACNLDNLDVLQPTETIKSEAGRLEYWDHNHPQLRCAGVSVSRLIIEQGGLYLPTFFSSPKIAYVVQGMGISGRVVPGCAETFMDSQPMQGQGQQGQQGQQGQQQQGFRDMHQKVEHVRHGDVIAITAGSAHWIYNTGDQPLVIVCLLDIANYQNQLDRNPRTFRLAGNNPQGGSHQQQQQQQQNMLSGFDPQVLAQALKMQLRLAQELQNQQDNRGNIVRVKGPFQVVRPPLRQQYESEQWRHPRGPPQSPQDNGLEETICSMRTHENIDDPARADVYKPNLGRVTSVNSYTLPILQYIRLSATRGILQGNAMVLPKYNMNANEILYCTQGQARIQVVNDNGQNVLDQQVQKGQLVVIPQGFAYVVQSHGNNFEWISFKTNANAMVSTLAGRTSALRALPLEVITNAFQISLEEARRIKFNTPETTLTHARGGQPQLIEEIVEA.

The first 23 residues, 1–23, serve as a signal peptide directing secretion; sequence MVKLAHLLVATFGVLLVLNGCLA. 2 disulfides stabilise this stretch: cysteine 37/cysteine 70 and cysteine 113/cysteine 296. Residues 42–241 enclose the Cupin type-1 1 domain; the sequence is LDVLQPTETI…ALKMQLRLAQ (200 aa). Threonine 116 carries the post-translational modification Phosphothreonine. 3 disordered regions span residues 117–144, 196–219, and 271–291; these read FMDSQPMQGQGQQGQQGQQGQQQQGFRD, RTFRLAGNNPQGGSHQQQQQQQQN, and YESEQWRHPRGPPQSPQDNGL. Residues 124-141 show a composition bias toward low complexity; that stretch reads QGQGQQGQQGQQGQQQQG. In terms of domain architecture, Cupin type-1 2 spans 302 to 451; the sequence is ENIDDPARAD…AFQISLEEAR (150 aa). Phosphothreonine is present on residues threonine 415 and threonine 440.

This sequence belongs to the 11S seed storage protein (globulins) family. In terms of assembly, hexamer; each subunit is composed of an acidic and a basic chain derived from a single precursor and linked by a disulfide bond.

Its function is as follows. This is a seed storage protein. The chain is Cruciferin PGCRURSE5 (CRURS) from Raphanus sativus (Radish).